A 725-amino-acid chain; its full sequence is N-alpha-acetyltransferase 35, NatC auxiliary subunit (725 aa).

At Ser187 the chain carries Phosphoserine. The interval 548 to 573 (ERIMEEQQKGRSSKKTKKKKKVRPLS) is disordered. The segment covering 558-571 (RSSKKTKKKKKVRP) has biased composition (basic residues).

This sequence belongs to the MAK10 family. In terms of assembly, component of the N-terminal acetyltransferase C (NatC) complex, which is composed of NAA35, NAA38 and NAA30.

The protein localises to the cytoplasm. Functionally, auxillary component of the N-terminal acetyltransferase C (NatC) complex which catalyzes acetylation of N-terminal methionine residues. N-terminal acetylation protects proteins from ubiquitination and degradation by the N-end rule pathway. Involved in regulation of apoptosis and proliferation of smooth muscle cells. The chain is N-alpha-acetyltransferase 35, NatC auxiliary subunit (NAA35) from Macaca fascicularis (Crab-eating macaque).